A 223-amino-acid polypeptide reads, in one-letter code: Peptidyl-tRNA hydrolase (223 aa).

Residue Tyr14 participates in tRNA binding. Residue His19 is the Proton acceptor of the active site. Residues Tyr64, Asn66, and Asn112 each coordinate tRNA. A disordered region spans residues 183–223; sequence MNVRNTRPKPGKRQKGEGDGSTDPAPAAKEGKGPLPPTQKP.

This sequence belongs to the PTH family. As to quaternary structure, monomer.

The protein localises to the cytoplasm. It carries out the reaction an N-acyl-L-alpha-aminoacyl-tRNA + H2O = an N-acyl-L-amino acid + a tRNA + H(+). Hydrolyzes ribosome-free peptidyl-tRNAs (with 1 or more amino acids incorporated), which drop off the ribosome during protein synthesis, or as a result of ribosome stalling. Its function is as follows. Catalyzes the release of premature peptidyl moieties from peptidyl-tRNA molecules trapped in stalled 50S ribosomal subunits, and thus maintains levels of free tRNAs and 50S ribosomes. This chain is Peptidyl-tRNA hydrolase, found in Sorangium cellulosum (strain So ce56) (Polyangium cellulosum (strain So ce56)).